We begin with the raw amino-acid sequence, 345 residues long: 4-hydroxy-2-oxovalerate aldolase 3 (345 aa).

The 253-residue stretch at 8-260 folds into the Pyruvate carboxyltransferase domain; it reads ITVHDMTLRD…ETGVDVWKIQ (253 aa). 16 to 17 provides a ligand contact to substrate; sequence RD. Asp17 provides a ligand contact to Mn(2+). Catalysis depends on His20, which acts as the Proton acceptor. Positions 170 and 199 each coordinate substrate. Mn(2+) is bound by residues His199 and His201. Tyr290 lines the substrate pocket.

This sequence belongs to the 4-hydroxy-2-oxovalerate aldolase family.

It catalyses the reaction (S)-4-hydroxy-2-oxopentanoate = acetaldehyde + pyruvate. In Comamonas testosteroni (Pseudomonas testosteroni), this protein is 4-hydroxy-2-oxovalerate aldolase 3 (aphG).